A 286-amino-acid chain; its full sequence is Oxidase hkm6 (286 aa).

His16, His25, and His215 together coordinate Cu cation.

Belongs to the tyrosinase family. Cu(2+) is required as a cofactor.

The protein operates within secondary metabolite biosynthesis. In terms of biological role, oxidase; part of the gene cluster that mediates the biosynthesis of hancockiamides, an unusual new family of N-cinnamoylated piperazines. The NRPS hkm10 and the NmrA-like reductase hkm9 are proposed to convert two molecules of L-Phe to the intermediary piperazine called xenocockiamide A. Xenocockiamide A is then converted to hancockiamide D via a series of hydroxylations and O-methylations. The tyrosinase hkm6 may catalyze an aromatic hydroxylation, then the 2-oxoglutarate-dependent Fe(II) dioxygenase hkm4 and the FAD-dependent phenol hydroxylase hkm7 may catalyze consecutive hydroxylations to install 2 more hydroxy groups, and the methyltransferase hkm8 probably catalyzes two methylations using 2 molecules of S-adenosyl-L-methionine (SAM). The NRPS hkm11 activates and transfers trans-cinnamate supplied by the PAL hkm12 to hancockiamide D and produces hancockiamide A. NRPS Hkm11 has the flexibility to tolerate the bulky hancockiamide G as a substrate and the absence of the acetyl-transferase hkm3 opens up the opportunity for hkm11 to introduce a second N-cinnamoyl moiety. The cytochrome P450 monooxygenase hkm5 catalyzes the methylenedioxy bridge formation, converting hancockiamide A into hancockiamide G. Hkm5 can also convert hancockiamide B into hancockiamide C, and hancockiamide D into hancockiamide H. The N-acetyltransferase hkm3 finally transfers an acetyl group to 1-N of piperazine, converting hancockiamide A into hancockiamide B and hancockiamide G into hancockiamide C. In Aspergillus hancockii, this protein is Oxidase hkm6.